We begin with the raw amino-acid sequence, 423 residues long: Glucose-1-phosphate adenylyltransferase (423 aa).

Alpha-D-glucose 1-phosphate contacts are provided by residues Tyr98, Gly163, 178 to 179 (EK), and Ser189.

It belongs to the bacterial/plant glucose-1-phosphate adenylyltransferase family. As to quaternary structure, homotetramer.

It carries out the reaction alpha-D-glucose 1-phosphate + ATP + H(+) = ADP-alpha-D-glucose + diphosphate. It participates in glycan biosynthesis; glycogen biosynthesis. Its function is as follows. Involved in the biosynthesis of ADP-glucose, a building block required for the elongation reactions to produce glycogen. Catalyzes the reaction between ATP and alpha-D-glucose 1-phosphate (G1P) to produce pyrophosphate and ADP-Glc. This is Glucose-1-phosphate adenylyltransferase from Thermotoga sp. (strain RQ2).